A 297-amino-acid chain; its full sequence is NADPH-dependent 1-acyldihydroxyacetone phosphate reductase (297 aa).

The GXSXG motif lies at 16–20 (GASGG). Ser18 (nucleophile; for lipase activity) is an active-site residue. Ile21, Asp64, Asn93, Arg126, Tyr157, Lys161, Val190, and Thr192 together coordinate NADP(+). Tyr157 functions as the Proton acceptor in the catalytic mechanism. The active-site Lowers pKa of active site Tyr is the Lys161.

The protein belongs to the short-chain dehydrogenases/reductases (SDR) family.

The protein resides in the lipid droplet. It localises to the mitochondrion outer membrane. It is found in the endoplasmic reticulum. It carries out the reaction a 1-acylglycerone 3-phosphate + NADPH + H(+) = a 1-acyl-sn-glycero-3-phosphate + NADP(+). It catalyses the reaction 1-hexadecanoyl-sn-glycero-3-phosphate + NADP(+) = 1-hexadecanoylglycerone 3-phosphate + NADPH + H(+). The catalysed reaction is a triacylglycerol + H2O = a diacylglycerol + a fatty acid + H(+). The enzyme catalyses 1,2,3-tri-(9Z-octadecenoyl)-glycerol + H2O = di-(9Z)-octadecenoylglycerol + (9Z)-octadecenoate + H(+). With respect to regulation, inhibited by divalent cations and N-ethylmaleimide. Activity is reduced under anaerobic growth conditions. Can convert acyl and alkyl dihydroxyacetone-phosphate (DHAP) into glycerolipids and ether lipids, respectively. Required for the biosynthesis of phosphatidic acid via the DHAP pathway, where it reduces 1-acyl DHAP to lysophosphatidic acid (LPA). Also has triacylglycerol (TAG) lipase activity. Involved in the mobilization of the non-polar storage lipids triacylglycerols (TAGs) from lipid particles by hydrolysis of TAGs. Required for spore germination. Plays a role in cell wall biogenesis, but this effect may be indirect by affecting the activities of cell wall synthesis enzymes. Lipolysis of TAG by AYR1 is essential for starvation-induced autophagy. Forms an NADPH-regulated cation-selective channel in the mitochondrial outer membrane. The polypeptide is NADPH-dependent 1-acyldihydroxyacetone phosphate reductase (Saccharomyces cerevisiae (strain ATCC 204508 / S288c) (Baker's yeast)).